A 160-amino-acid polypeptide reads, in one-letter code: Cytochrome b6-f complex subunit 4 (160 aa).

3 consecutive transmembrane segments (helical) span residues 36 to 56 (LLYI…GLAV), 95 to 115 (LLGV…PFLE), and 131 to 151 (TVFL…TLPI).

This sequence belongs to the cytochrome b family. PetD subfamily. As to quaternary structure, the 4 large subunits of the cytochrome b6-f complex are cytochrome b6, subunit IV (17 kDa polypeptide, petD), cytochrome f and the Rieske protein, while the 4 small subunits are petG, petL, petM and petN. The complex functions as a dimer.

The protein resides in the plastid. The protein localises to the chloroplast thylakoid membrane. Component of the cytochrome b6-f complex, which mediates electron transfer between photosystem II (PSII) and photosystem I (PSI), cyclic electron flow around PSI, and state transitions. This chain is Cytochrome b6-f complex subunit 4, found in Lotus japonicus (Lotus corniculatus var. japonicus).